The sequence spans 478 residues: Serine/threonine-protein phosphatase T (478 aa).

3 TPR repeats span residues 9–42 (ATAL…YDRE), 43–76 (PSFF…DPAY), and 78–110 (KAYW…EPNN). Positions 151-463 (AVDDSYDGVR…QVFEAVPHPD (313 aa)) are catalytic. Residues Asp221, His223, Asp250, and Asn282 each coordinate Mn(2+). His283 (proton donor/acceptor) is an active-site residue. 2 residues coordinate Mn(2+): His331 and His408.

The protein belongs to the PPP phosphatase family. PP-5 (PP-T) subfamily. It depends on Mg(2+) as a cofactor. Mn(2+) serves as cofactor.

Its subcellular location is the nucleus. The catalysed reaction is O-phospho-L-seryl-[protein] + H2O = L-seryl-[protein] + phosphate. It carries out the reaction O-phospho-L-threonyl-[protein] + H2O = L-threonyl-[protein] + phosphate. Functionally, protein phosphatase that specifically binds to and dephosphorylates the molecular chaperone Hsp90. Dephosphorylation positively regulates the Hsp90 chaperone machinery. This is Serine/threonine-protein phosphatase T from Aspergillus oryzae (strain ATCC 42149 / RIB 40) (Yellow koji mold).